The primary structure comprises 115 residues: uncharacterized protein (115 aa).

The disordered stretch occupies residues 1-115; it reads MGETWFLTPN…ARSPERTPSP (115 aa). Polar residues predominate over residues 7-17; that stretch reads LTPNGQSSPGS. Low complexity-rich tracts occupy residues 60–70 and 91–107; these read ASCAPRATPRR and SASA…WPAR.

This is an uncharacterized protein from Human adenovirus C serotype 2 (HAdV-2).